The following is a 783-amino-acid chain: Polyribonucleotide nucleotidyltransferase 1, mitochondrial (783 aa).

The N-terminal 45 residues, 1 to 45 (MAACRYCCSCLRLRPLSDGPFLLPRRDRALTQLQVRALWSSAGSR), are a transit peptide targeting the mitochondrion. 4 positions are modified to N6-acetyllysine: lysine 250, lysine 264, lysine 285, and lysine 289. Position 552 is an N6-succinyllysine (lysine 552). A KH domain is found at 605–664 (PVVETVQVPLSKRAKFVGPGGYNLKKLQAETGVTISQVDEETFSVFAPTPSAMHEARDFI). The S1 motif domain occupies 679–750 (GAVYTATITE…ADGRMRLSRK (72 aa)). Phosphoserine is present on residues serine 754 and serine 782.

It belongs to the polyribonucleotide nucleotidyltransferase family. In terms of assembly, homotrimer; in free form. Homooligomer. Component of the mitochondrial degradosome (mtEXO) complex which is a heteropentamer containing 2 copies of SUPV3L1 and 3 copies of PNPT1. As part of the mitochondrial degradosome complex, interacts with GRSF1 in an RNA-dependent manner; the interaction enhances the activity of the complex. Interacts with TCL1A; the interaction has no effect on PNPT1 exonuclease activity.

Its subcellular location is the cytoplasm. The protein localises to the mitochondrion matrix. It is found in the mitochondrion intermembrane space. It catalyses the reaction RNA(n+1) + phosphate = RNA(n) + a ribonucleoside 5'-diphosphate. RNA-binding protein implicated in numerous RNA metabolic processes. Catalyzes the phosphorolysis of single-stranded polyribonucleotides processively in the 3'-to-5' direction. Mitochondrial intermembrane factor with RNA-processing exoribonulease activity. Component of the mitochondrial degradosome (mtEXO) complex, that degrades 3' overhang double-stranded RNA with a 3'-to-5' directionality in an ATP-dependent manner. Involved in the degradation of non-coding mitochondrial transcripts (MT-ncRNA) and tRNA-like molecules. Required for correct processing and polyadenylation of mitochondrial mRNAs. Plays a role as a cytoplasmic RNA import factor that mediates the translocation of small RNA components, like the 5S RNA, the RNA subunit of ribonuclease P and the mitochondrial RNA-processing (MRP) RNA, into the mitochondrial matrix. Plays a role in mitochondrial morphogenesis and respiration; regulates the expression of the electron transport chain (ETC) components at the mRNA and protein levels. In the cytoplasm, shows a 3'-to-5' exoribonuclease mediating mRNA degradation activity; degrades c-myc mRNA upon treatment with IFNB1/IFN-beta, resulting in a growth arrest in melanoma cells. Regulates the stability of specific mature miRNAs in melanoma cells; specifically and selectively degrades miR-221, preferentially. Also plays a role in RNA cell surveillance by cleaning up oxidized RNAs. Binds to the RNA subunit of ribonuclease P, MRP RNA and miR-221 microRNA. This Homo sapiens (Human) protein is Polyribonucleotide nucleotidyltransferase 1, mitochondrial.